Reading from the N-terminus, the 183-residue chain is Large ribosomal subunit protein bL25 (183 aa).

This sequence belongs to the bacterial ribosomal protein bL25 family. CTC subfamily. As to quaternary structure, part of the 50S ribosomal subunit; part of the 5S rRNA/L5/L18/L25 subcomplex. Contacts the 5S rRNA. Binds to the 5S rRNA independently of L5 and L18.

In terms of biological role, this is one of the proteins that binds to the 5S RNA in the ribosome where it forms part of the central protuberance. This Desulfotalea psychrophila (strain LSv54 / DSM 12343) protein is Large ribosomal subunit protein bL25.